Reading from the N-terminus, the 268-residue chain is Tryptophan synthase alpha chain (268 aa).

Catalysis depends on proton acceptor residues Glu49 and Asp60.

The protein belongs to the TrpA family. As to quaternary structure, tetramer of two alpha and two beta chains.

The enzyme catalyses (1S,2R)-1-C-(indol-3-yl)glycerol 3-phosphate + L-serine = D-glyceraldehyde 3-phosphate + L-tryptophan + H2O. It participates in amino-acid biosynthesis; L-tryptophan biosynthesis; L-tryptophan from chorismate: step 5/5. Its function is as follows. The alpha subunit is responsible for the aldol cleavage of indoleglycerol phosphate to indole and glyceraldehyde 3-phosphate. This is Tryptophan synthase alpha chain from Pseudomonas paraeruginosa (strain DSM 24068 / PA7) (Pseudomonas aeruginosa (strain PA7)).